The following is a 625-amino-acid chain: 1-deoxy-D-xylulose-5-phosphate synthase (625 aa).

Residues histidine 80 and 121–123 contribute to the thiamine diphosphate site; that span reads GHS. Residue aspartate 152 coordinates Mg(2+). Thiamine diphosphate contacts are provided by residues 153–154, asparagine 181, tyrosine 290, and glutamate 371; that span reads GA. Asparagine 181 lines the Mg(2+) pocket.

The protein belongs to the transketolase family. DXPS subfamily. In terms of assembly, homodimer. It depends on Mg(2+) as a cofactor. The cofactor is thiamine diphosphate.

The enzyme catalyses D-glyceraldehyde 3-phosphate + pyruvate + H(+) = 1-deoxy-D-xylulose 5-phosphate + CO2. It functions in the pathway metabolic intermediate biosynthesis; 1-deoxy-D-xylulose 5-phosphate biosynthesis; 1-deoxy-D-xylulose 5-phosphate from D-glyceraldehyde 3-phosphate and pyruvate: step 1/1. Functionally, catalyzes the acyloin condensation reaction between C atoms 2 and 3 of pyruvate and glyceraldehyde 3-phosphate to yield 1-deoxy-D-xylulose-5-phosphate (DXP). The polypeptide is 1-deoxy-D-xylulose-5-phosphate synthase (Haemophilus influenzae (strain 86-028NP)).